Consider the following 559-residue polypeptide: Serine/threonine-protein kinase bur1 (559 aa).

The 302-residue stretch at 40–341 folds into the Protein kinase domain; the sequence is YEVLGKLGEG…AIDALNHPYF (302 aa). ATP is bound by residues 46-54 and Lys-69; that span reads LGEGTFGEV. Residue Asp-171 is the Proton acceptor of the active site. Basic and acidic residues predominate over residues 359–372; it reads SHEFDRRKFQDRKA. Positions 359–559 are disordered; it reads SHEFDRRKFQ…GRDRDAYARR (201 aa). A compositionally biased stretch (gly residues) spans 400–414; it reads GRDGYGGGGRNGANG. 3 stretches are compositionally biased toward basic and acidic residues: residues 457-467, 491-534, and 543-559; these read DHTDGYRDRPP, YDRD…DSRT, and PVRD…YARR.

Belongs to the protein kinase superfamily. CMGC Ser/Thr protein kinase family. CDC2/CDKX subfamily.

The protein localises to the nucleus. It carries out the reaction L-seryl-[protein] + ATP = O-phospho-L-seryl-[protein] + ADP + H(+). The catalysed reaction is L-threonyl-[protein] + ATP = O-phospho-L-threonyl-[protein] + ADP + H(+). It catalyses the reaction [DNA-directed RNA polymerase] + ATP = phospho-[DNA-directed RNA polymerase] + ADP + H(+). Functionally, serine/threonine-protein kinase involved in transcription regulation. Phosphorylates the mus-8/ubc2 ubiquitin-conjugating enzyme (E2), leading to monoubiquitination of histone H2B and the silencing of telomeric-associated genes. Also required for histone H3 methylation. Necessary for the recovery from pheromone-induced growth arrest in the cell cycle G1 phase. The polypeptide is Serine/threonine-protein kinase bur1 (stk-1) (Neurospora crassa (strain ATCC 24698 / 74-OR23-1A / CBS 708.71 / DSM 1257 / FGSC 987)).